The following is a 259-amino-acid chain: MADACCTRTYVIAASTMSVCSSDVGHVSRVSSPSTCTGSSWQVDNCQESCCEPRSCASSCCTPSCCAPAPCLALVCAPVSCEPSPCQSGCTDSCTPSCCQQSSCQPACCTSSPCQQACCVPVCCKSNCCKPVCCVSICSGASSPCCQQSSCQSACCTFSPCQQACCVPICCKPICCVPVCSGASSLCCQKSSCQPACCTTSCCRPSSSVSLLCRPVCRPACCVPVPSCCVPASSCQPSCCHPASCLSFLCRPACSRLAC.

A 19 X 5 AA repeats of C-C-X(3) region spans residues 26–243; sequence HVSRVSSPST…SCQPSCCHPA (218 aa). 19 consecutive repeat copies span residues 50–54, 60–64, 65–69, 98–102, 108–112, 118–122, 123–127, 133–137, 145–149, 155–159, 165–169, 170–174, 175–179, 187–191, 197–201, 202–206, 221–225, 228–232, and 239–243.

Belongs to the KRTAP type 10 family. In terms of assembly, interacts with hair keratins. Restricted to a narrow region of the hair fiber cuticle, lying approximately 20 cell layers above the apex of the dermal papilla of the hair root; not detected in any other tissues.

Functionally, in the hair cortex, hair keratin intermediate filaments are embedded in an interfilamentous matrix, consisting of hair keratin-associated proteins (KRTAP), which are essential for the formation of a rigid and resistant hair shaft through their extensive disulfide bond cross-linking with abundant cysteine residues of hair keratins. The matrix proteins include the high-sulfur and high-glycine-tyrosine keratins. This is Keratin-associated protein 10-8 (KRTAP10-8) from Homo sapiens (Human).